Consider the following 424-residue polypeptide: Keratin, type I cytoskeletal 20 (424 aa).

Residues 1–69 form a head region; it reads MDFSRRSFHR…TGGGDLFVGN (69 aa). At serine 13 the chain carries Phosphoserine; by MAPKAPK2, MAPKAPK3 and PKC. Residues 70–105 form a coil 1A region; the sequence is EKMAMQNLNDRLASYLEKVRTLEQSNSKLEVQIKQW. The IF rod domain occupies 70-381; sequence EKMAMQNLND…RLLEGEDVKT (312 aa). The interval 106 to 123 is linker 1; that stretch reads YETNAPRAGRDYSAYYRQ. The tract at residues 124-215 is coil 1B; sequence IEELRSQIKD…KEHQEEVDGL (92 aa). A linker 12 region spans residues 216–238; the sequence is HKHLGNTVNVEVDAAPGLNLGVI. A coil 2 region spans residues 239–377; sequence MNEMRQKYEV…ATYRRLLEGE (139 aa). The segment at 378–424 is tail; sequence DVKTTEYQLSTLEERDIKKTRKIKTVVQEVVDGKVVSSEVKEVEENI.

The protein belongs to the intermediate filament family. Heterotetramer of two type I and two type II keratins. Associates with KRT8. Post-translationally, hyperphosphorylation at Ser-13 occurs during the early stages of apoptosis but becomes less prominent during the later stages. Phosphorylation at Ser-13 also increases in response to stress brought on by cell injury. Proteolytically cleaved by caspases during apoptosis. Cleavage occurs at Asp-228. Expressed predominantly in the intestinal epithelium. Expressed in luminal cells of colonic mucosa. Also expressed in the Merkel cells of keratinized oral mucosa; specifically at the tips of some rete ridges of the gingival mucosa, in the basal layer of the palatal mucosa and in the taste buds of lingual mucosa.

The protein localises to the cytoplasm. Its function is as follows. Plays a significant role in maintaining keratin filament organization in intestinal epithelia. When phosphorylated, plays a role in the secretion of mucin in the small intestine. This Homo sapiens (Human) protein is Keratin, type I cytoskeletal 20 (KRT20).